The primary structure comprises 216 residues: Glycerol-3-phosphate acyltransferase (216 aa).

Helical transmembrane passes span L11–V31, L62–S82, V95–L115, A132–F152, and L171–I191.

This sequence belongs to the PlsY family. Probably interacts with PlsX.

It is found in the cell inner membrane. The catalysed reaction is an acyl phosphate + sn-glycerol 3-phosphate = a 1-acyl-sn-glycero-3-phosphate + phosphate. It participates in lipid metabolism; phospholipid metabolism. Its function is as follows. Catalyzes the transfer of an acyl group from acyl-phosphate (acyl-PO(4)) to glycerol-3-phosphate (G3P) to form lysophosphatidic acid (LPA). This enzyme utilizes acyl-phosphate as fatty acyl donor, but not acyl-CoA or acyl-ACP. This Rhodospirillum rubrum (strain ATCC 11170 / ATH 1.1.1 / DSM 467 / LMG 4362 / NCIMB 8255 / S1) protein is Glycerol-3-phosphate acyltransferase.